A 721-amino-acid chain; its full sequence is Mitogen-activated protein kinase 6 (721 aa).

A Protein kinase domain is found at 20-316; it reads YMDLKPLGCG…AEEALSHPYM (297 aa). Residues 26 to 34 and K49 each bind ATP; that span reads LGCGGNGLV. Residue D152 is the Proton acceptor of the active site. Residue T626 is modified to Phosphothreonine. Positions 626-628 match the TXY motif; sequence TSY. The residue at position 628 (Y628) is a Phosphotyrosine.

Belongs to the protein kinase superfamily. CMGC Ser/Thr protein kinase family. MAP kinase subfamily. It depends on Mg(2+) as a cofactor. In terms of processing, dually phosphorylated on Thr-626 and Tyr-628, which activates the enzyme.

The catalysed reaction is L-seryl-[protein] + ATP = O-phospho-L-seryl-[protein] + ADP + H(+). The enzyme catalyses L-threonyl-[protein] + ATP = O-phospho-L-threonyl-[protein] + ADP + H(+). With respect to regulation, activated by threonine and tyrosine phosphorylation. Phosphorylates microtubule-associated protein 2 (MAP2). May promote entry in the cell cycle. This Gallus gallus (Chicken) protein is Mitogen-activated protein kinase 6 (MAPK6).